The following is a 156-amino-acid chain: Transcription factor MafF (156 aa).

The interval 51–76 (RLKQRRRTLKNRGYAASCRVKRVCQK) is basic motif. The bZIP domain occupies 51-114 (RLKQRRRTLK…DALRGKCEAL (64 aa)). The leucine-zipper stretch occupies residues 79-93 (LQKQKSELEREVDKL).

This sequence belongs to the bZIP family. Maf subfamily. As to quaternary structure, monomer and homo- or heterodimer. Interacts with MIP. Forms high affinity heterodimers with members of the CNC-bZIP family such as NFE2L1/NRF1. In terms of tissue distribution, highly expressed in the lung, lower expression in the brain, thymus, liver, spleen, intestine, kidney, heart, muscle, and ovary. Not significantly expressed in hematopoietic cells.

The protein localises to the nucleus. Its function is as follows. Since they lack a putative transactivation domain, the small Mafs behave as transcriptional repressors when they dimerize among themselves. However, they seem to serve as transcriptional activators by dimerizing with other (usually larger) basic-zipper proteins, such as NFE2L1/NRF1, and recruiting them to specific DNA-binding sites. Interacts with the upstream promoter region of the oxytocin receptor gene. May be a transcriptional enhancer in the up-regulation of the oxytocin receptor gene at parturition. This Mus musculus (Mouse) protein is Transcription factor MafF (Maff).